We begin with the raw amino-acid sequence, 620 residues long: Dopamine beta-hydroxylase (620 aa).

Residues 1-19 (MQPHLSHQPCWSLPSPSVR) are Cytoplasmic-facing. The helical; Signal-anchor for type II membrane protein transmembrane segment at 20–40 (EAASMYGTAVAIFLVILVAAL) threads the bilayer. Over 41-620 (QGSEPPESPF…FVVITHGGRH (580 aa)) the chain is Intragranular. Positions 60–176 (GTLELSWNVS…DTVHLVYGIL (117 aa)) constitute a DOMON domain. Residues asparagine 67 and asparagine 187 are each glycosylated (N-linked (GlcNAc...) asparagine). 6 disulfide bridges follow: cysteine 157–cysteine 599, cysteine 235–cysteine 286, cysteine 272–cysteine 298, cysteine 393–cysteine 506, cysteine 397–cysteine 568, and cysteine 469–cysteine 491. Tyrosine 233 is an active-site residue. Residues histidine 265 and histidine 266 each contribute to the Cu(2+) site. The N-linked (GlcNAc...) asparagine glycan is linked to asparagine 274. Histidine 336 lines the Cu(2+) pocket. Serine 349 carries the phosphoserine; by CaMK modification. The active site involves histidine 415. Cu(2+)-binding residues include histidine 415 and histidine 417. A glycan (N-linked (GlcNAc...) asparagine) is linked at asparagine 475. Methionine 490 is a binding site for Cu(2+). N-linked (GlcNAc...) asparagine glycans are attached at residues asparagine 569 and asparagine 587.

This sequence belongs to the copper type II ascorbate-dependent monooxygenase family. Homotetramer; composed of two disulfide-linked dimers. Cu(2+) serves as cofactor. Post-translationally, proteolytic cleavage after the membrane-anchor leads to the release of the soluble form. N-glycosylated. In terms of tissue distribution, chromaffin granules of the adrenal medulla and synaptic vesicles of the sympathetic nervous system.

It localises to the cytoplasmic vesicle. The protein resides in the secretory vesicle lumen. It is found in the secretory vesicle. Its subcellular location is the chromaffin granule lumen. The protein localises to the secreted. It localises to the secretory vesicle membrane. The protein resides in the chromaffin granule membrane. It catalyses the reaction dopamine + 2 L-ascorbate + O2 = (R)-noradrenaline + 2 monodehydro-L-ascorbate radical + H2O. It functions in the pathway catecholamine biosynthesis; (R)-noradrenaline biosynthesis; (R)-noradrenaline from dopamine: step 1/1. Its function is as follows. Catalyzes the hydroxylation of dopamine to noradrenaline (also known as norepinephrine), and is thus vital for regulation of these neurotransmitters. The protein is Dopamine beta-hydroxylase (Dbh) of Rattus norvegicus (Rat).